Reading from the N-terminus, the 123-residue chain is Large ribosomal subunit protein uL14 (123 aa).

It belongs to the universal ribosomal protein uL14 family. Part of the 50S ribosomal subunit. Forms a cluster with proteins L3 and L19. In the 70S ribosome, L14 and L19 interact and together make contacts with the 16S rRNA in bridges B5 and B8.

Binds to 23S rRNA. Forms part of two intersubunit bridges in the 70S ribosome. This Buchnera aphidicola subsp. Cinara cedri (strain Cc) protein is Large ribosomal subunit protein uL14.